The primary structure comprises 128 residues: Large-conductance mechanosensitive channel (128 aa).

Helical transmembrane passes span 10–30 (FAMRGNVVDMAVGVIIGGAFG) and 76–96 (GLFIQNVFDFIIIAFAIFMMV).

This sequence belongs to the MscL family. As to quaternary structure, homopentamer.

Its subcellular location is the cell inner membrane. Functionally, channel that opens in response to stretch forces in the membrane lipid bilayer. May participate in the regulation of osmotic pressure changes within the cell. This Mannheimia succiniciproducens (strain KCTC 0769BP / MBEL55E) protein is Large-conductance mechanosensitive channel.